Here is a 640-residue protein sequence, read N- to C-terminus: Arogenate dehydrogenase 1, chloroplastic (640 aa).

The N-terminal 18 residues, 1 to 18 (MAETLITKPPLSLSFTSL), are a transit peptide targeting the chloroplast. Prephenate/arogenate dehydrogenase domains follow at residues 53 to 334 (LRIA…GEND) and 365 to 640 (LKIG…LLTS).

Belongs to the prephenate/arogenate dehydrogenase family. In terms of tissue distribution, expressed in roots, stems, leaves, flowers, siliques and seeds. More abundant in seeds.

The protein localises to the plastid. It localises to the chloroplast. The catalysed reaction is L-arogenate + NADP(+) = L-tyrosine + CO2 + NADPH. It functions in the pathway amino-acid biosynthesis; L-tyrosine biosynthesis; L-tyrosine from L-arogenate (NADP(+) route): step 1/1. In terms of biological role, involved in the biosynthesis of tyrosine. Has no prephenate dehydrogenase activity. The protein is Arogenate dehydrogenase 1, chloroplastic (TYRAAT1) of Arabidopsis thaliana (Mouse-ear cress).